The primary structure comprises 262 residues: Adenosylcobinamide-GDP ribazoletransferase (262 aa).

Transmembrane regions (helical) follow at residues 43–63 (YFGLVGLLVGLLSAIIFWLTQ), 66–86 (LPAGVSVLLSMLTGILLTGGF), 120–140 (GALALIMVLLLKWQLLVELAL), 146–166 (AGSAMIVAHTVSRVVAASLIF), 191–211 (LFILIASGVLVLLVLKGIAAL), and 242–262 (AAQQICEIVCYFVLLVVGGIL).

It belongs to the CobS family. The cofactor is Mg(2+).

Its subcellular location is the cell inner membrane. The enzyme catalyses alpha-ribazole + adenosylcob(III)inamide-GDP = adenosylcob(III)alamin + GMP + H(+). It carries out the reaction alpha-ribazole 5'-phosphate + adenosylcob(III)inamide-GDP = adenosylcob(III)alamin 5'-phosphate + GMP + H(+). It participates in cofactor biosynthesis; adenosylcobalamin biosynthesis; adenosylcobalamin from cob(II)yrinate a,c-diamide: step 7/7. Joins adenosylcobinamide-GDP and alpha-ribazole to generate adenosylcobalamin (Ado-cobalamin). Also synthesizes adenosylcobalamin 5'-phosphate from adenosylcobinamide-GDP and alpha-ribazole 5'-phosphate. The sequence is that of Adenosylcobinamide-GDP ribazoletransferase from Shewanella oneidensis (strain ATCC 700550 / JCM 31522 / CIP 106686 / LMG 19005 / NCIMB 14063 / MR-1).